The following is a 305-amino-acid chain: Sulfate adenylyltransferase subunit 2 (305 aa).

It belongs to the PAPS reductase family. CysD subfamily. In terms of assembly, heterodimer composed of CysD, the smaller subunit, and CysN.

The catalysed reaction is sulfate + ATP + H(+) = adenosine 5'-phosphosulfate + diphosphate. Its pathway is sulfur metabolism; hydrogen sulfide biosynthesis; sulfite from sulfate: step 1/3. With CysN forms the ATP sulfurylase (ATPS) that catalyzes the adenylation of sulfate producing adenosine 5'-phosphosulfate (APS) and diphosphate, the first enzymatic step in sulfur assimilation pathway. APS synthesis involves the formation of a high-energy phosphoric-sulfuric acid anhydride bond driven by GTP hydrolysis by CysN coupled to ATP hydrolysis by CysD. This chain is Sulfate adenylyltransferase subunit 2, found in Pseudomonas syringae pv. tomato (strain ATCC BAA-871 / DC3000).